Here is a 58-residue protein sequence, read N- to C-terminus: UPF0391 membrane protein OCAR_5266/OCA5_c27040 (58 aa).

The next 2 helical transmembrane spans lie at 4–24 (WVVT…GGIA) and 30–50 (IAKI…VVGL).

Belongs to the UPF0391 family.

It is found in the cell membrane. This chain is UPF0391 membrane protein OCAR_5266/OCA5_c27040, found in Afipia carboxidovorans (strain ATCC 49405 / DSM 1227 / KCTC 32145 / OM5) (Oligotropha carboxidovorans).